Reading from the N-terminus, the 231-residue chain is Ribonuclease HII (231 aa).

The RNase H type-2 domain maps to 32–223 (WPVAGMDEAG…FRLGGTEVVE (192 aa)). Aspartate 38, glutamate 39, and aspartate 130 together coordinate a divalent metal cation.

Belongs to the RNase HII family. Mn(2+) serves as cofactor. Mg(2+) is required as a cofactor.

The protein localises to the cytoplasm. The enzyme catalyses Endonucleolytic cleavage to 5'-phosphomonoester.. Endonuclease that specifically degrades the RNA of RNA-DNA hybrids. The polypeptide is Ribonuclease HII (Mesorhizobium japonicum (strain LMG 29417 / CECT 9101 / MAFF 303099) (Mesorhizobium loti (strain MAFF 303099))).